A 449-amino-acid polypeptide reads, in one-letter code: Putative methylthiotransferase MJ0865 (449 aa).

A Radical SAM core domain is found at 163 to 390 (SIRGANVYIE…EGEYRKLGLS (228 aa)). Cys-177, Cys-181, and Cys-184 together coordinate [4Fe-4S] cluster.

Belongs to the methylthiotransferase family. The cofactor is [4Fe-4S] cluster.

The sequence is that of Putative methylthiotransferase MJ0865 from Methanocaldococcus jannaschii (strain ATCC 43067 / DSM 2661 / JAL-1 / JCM 10045 / NBRC 100440) (Methanococcus jannaschii).